The sequence spans 346 residues: Protein SHI RELATED SEQUENCE 5 (346 aa).

Positions 7–31 (LGGRDNNSNNNKQDHHQVDKDHHHQ) are disordered. Over residues 18–31 (KQDHHQVDKDHHHQ) the composition is skewed to basic and acidic residues. Zn(2+) is bound by residues cysteine 125, cysteine 128, cysteine 136, cysteine 141, cysteine 145, and cysteine 152. The zn(2)-C6 fungal-type; degenerate DNA-binding region spans 125–152 (CQDCGNQAKKDCPHMRCRTCCKSRGFHC). Residues 175 to 186 (SLQHHSASSRET) are compositionally biased toward polar residues. The interval 175-215 (SLQHHSASSRETQNAKRLREASGGDNNDDKDHSGGGGSALA) is disordered. The span at 187–207 (QNAKRLREASGGDNNDDKDHS) shows a compositional bias: basic and acidic residues. Residues 269–272 (IGGH) carry the Required for homo- and heterodimerization motif.

The protein belongs to the SHI protein family.

It is found in the nucleus. Transcription activator that binds DNA on 5'-ACTCTAC-3' and promotes auxin homeostasis-regulating gene expression (e.g. YUC genes), as well as genes affecting stamen development, cell expansion and timing of flowering. Synergistically with other SHI-related proteins, regulates gynoecium, stamen and leaf development in a dose-dependent manner, controlling apical-basal patterning. Promotes style and stigma formation, and influences vascular development during gynoecium development. May also have a role in the formation and/or maintenance of the shoot apical meristem (SAM). The sequence is that of Protein SHI RELATED SEQUENCE 5 (SRS5) from Arabidopsis thaliana (Mouse-ear cress).